The following is a 307-amino-acid chain: tRNA dimethylallyltransferase (307 aa).

10–17 contributes to the ATP binding site; the sequence is GPTASGKS. 12–17 contacts substrate; it reads TASGKS. Interaction with substrate tRNA stretches follow at residues 35-38 and 159-163; these read DSMQ and QRLCR.

Belongs to the IPP transferase family. In terms of assembly, monomer. The cofactor is Mg(2+).

The catalysed reaction is adenosine(37) in tRNA + dimethylallyl diphosphate = N(6)-dimethylallyladenosine(37) in tRNA + diphosphate. Its function is as follows. Catalyzes the transfer of a dimethylallyl group onto the adenine at position 37 in tRNAs that read codons beginning with uridine, leading to the formation of N6-(dimethylallyl)adenosine (i(6)A). In Phenylobacterium zucineum (strain HLK1), this protein is tRNA dimethylallyltransferase.